The following is a 224-amino-acid chain: UPF0758 protein PSPTO_0086 (224 aa).

The 123-residue stretch at A102–M224 folds into the MPN domain. Zn(2+) is bound by residues H173, H175, and D186. A JAMM motif motif is present at residues H173 to D186.

Belongs to the UPF0758 family.

The sequence is that of UPF0758 protein PSPTO_0086 from Pseudomonas syringae pv. tomato (strain ATCC BAA-871 / DC3000).